The chain runs to 968 residues: RNA polymerase-associated protein RapA (968 aa).

The Helicase ATP-binding domain maps to 164-334 (EVGQRHAPRV…FARLRLLDPN (171 aa)). 177-184 (DEVGLGKT) is a binding site for ATP. Positions 280–283 (DEAH) match the DEAH box motif. In terms of domain architecture, Helicase C-terminal spans 493 to 644 (WLVDFLLDLR…TCPTGRALYD (152 aa)).

Belongs to the SNF2/RAD54 helicase family. RapA subfamily. As to quaternary structure, interacts with the RNAP. Has a higher affinity for the core RNAP than for the holoenzyme. Its ATPase activity is stimulated by binding to RNAP.

Transcription regulator that activates transcription by stimulating RNA polymerase (RNAP) recycling in case of stress conditions such as supercoiled DNA or high salt concentrations. Probably acts by releasing the RNAP, when it is trapped or immobilized on tightly supercoiled DNA. Does not activate transcription on linear DNA. Probably not involved in DNA repair. This is RNA polymerase-associated protein RapA from Sodalis glossinidius (strain morsitans).